A 174-amino-acid polypeptide reads, in one-letter code: Dual-action ribosomal maturation protein DarP (174 aa).

It belongs to the DarP family.

Its subcellular location is the cytoplasm. In terms of biological role, member of a network of 50S ribosomal subunit biogenesis factors which assembles along the 30S-50S interface, preventing incorrect 23S rRNA structures from forming. Promotes peptidyl transferase center (PTC) maturation. The sequence is that of Dual-action ribosomal maturation protein DarP from Pseudomonas paraeruginosa (strain DSM 24068 / PA7) (Pseudomonas aeruginosa (strain PA7)).